A 199-amino-acid chain; its full sequence is Imidazoleglycerol-phosphate dehydratase (199 aa).

The protein belongs to the imidazoleglycerol-phosphate dehydratase family.

Its subcellular location is the cytoplasm. The catalysed reaction is D-erythro-1-(imidazol-4-yl)glycerol 3-phosphate = 3-(imidazol-4-yl)-2-oxopropyl phosphate + H2O. The protein operates within amino-acid biosynthesis; L-histidine biosynthesis; L-histidine from 5-phospho-alpha-D-ribose 1-diphosphate: step 6/9. The chain is Imidazoleglycerol-phosphate dehydratase from Methylibium petroleiphilum (strain ATCC BAA-1232 / LMG 22953 / PM1).